Reading from the N-terminus, the 232-residue chain is Imidazole glycerol phosphate synthase subunit HisF (232 aa).

Active-site residues include Asp-11 and Asp-130.

Belongs to the HisA/HisF family. Heterodimer of HisH and HisF.

It localises to the cytoplasm. The enzyme catalyses 5-[(5-phospho-1-deoxy-D-ribulos-1-ylimino)methylamino]-1-(5-phospho-beta-D-ribosyl)imidazole-4-carboxamide + L-glutamine = D-erythro-1-(imidazol-4-yl)glycerol 3-phosphate + 5-amino-1-(5-phospho-beta-D-ribosyl)imidazole-4-carboxamide + L-glutamate + H(+). Its pathway is amino-acid biosynthesis; L-histidine biosynthesis; L-histidine from 5-phospho-alpha-D-ribose 1-diphosphate: step 5/9. Functionally, IGPS catalyzes the conversion of PRFAR and glutamine to IGP, AICAR and glutamate. The HisF subunit catalyzes the cyclization activity that produces IGP and AICAR from PRFAR using the ammonia provided by the HisH subunit. This is Imidazole glycerol phosphate synthase subunit HisF from Listeria monocytogenes serotype 4a (strain HCC23).